The following is a 198-amino-acid chain: Synaptobrevin homolog YKT6-A (198 aa).

The 120-residue stretch at 8-127 (VLYKGENKVH…IQYNALDSYL (120 aa)) folds into the Longin domain. A v-SNARE coiled-coil homology domain is found at 138-198 (PMSKVQAELD…RKQNSCCDIM (61 aa)). C194 is lipidated: S-palmitoyl cysteine. C195 is subject to Cysteine methyl ester. C195 carries S-farnesyl cysteine lipidation. The propeptide at 196-198 (DIM) is removed in mature form.

This sequence belongs to the synaptobrevin family. Palmitoylated; catalyzes its own palmitoylation. Palmitoylation is required for Golgi targeting. Post-translationally, farnesylation is required for Golgi targeting.

It is found in the cytoplasm. The protein localises to the cytosol. It localises to the cytoplasmic vesicle membrane. Its subcellular location is the golgi apparatus membrane. In terms of biological role, vesicular soluble NSF attachment protein receptor (v-SNARE) mediating vesicle docking and fusion to a specific acceptor cellular compartment. Functions in endoplasmic reticulum to Golgi transport; as part of a SNARE complex composed of GOSR1, GOSR2 and STX5. Functions in early/recycling endosome to TGN transport; as part of a SNARE complex composed of BET1L, GOSR1 and STX5. Has a S-palmitoyl transferase activity. This chain is Synaptobrevin homolog YKT6-A (ykt6-a), found in Xenopus laevis (African clawed frog).